The sequence spans 720 residues: Polyribonucleotide nucleotidyltransferase (720 aa).

Positions 487 and 493 each coordinate Mg(2+). The 60-residue stretch at 554–613 (PRIETFKIPTDKIREVIGTGGKVIREIVEKTGAKVNIEDDGTVKVASSDGEAMKAAIKWI) folds into the KH domain. One can recognise an S1 motif domain in the interval 623-691 (GQIYDGTVVK…DRGKTRLSMK (69 aa)). A disordered region spans residues 692–720 (AVDQTTGEDLEAKQKAEGGAEAPREAAGE). Basic and acidic residues predominate over residues 701–720 (LEAKQKAEGGAEAPREAAGE).

This sequence belongs to the polyribonucleotide nucleotidyltransferase family. Mg(2+) is required as a cofactor.

It localises to the cytoplasm. It carries out the reaction RNA(n+1) + phosphate = RNA(n) + a ribonucleoside 5'-diphosphate. Its function is as follows. Involved in mRNA degradation. Catalyzes the phosphorolysis of single-stranded polyribonucleotides processively in the 3'- to 5'-direction. In Bradyrhizobium sp. (strain BTAi1 / ATCC BAA-1182), this protein is Polyribonucleotide nucleotidyltransferase.